A 229-amino-acid polypeptide reads, in one-letter code: Glutathione S-transferase 1 (229 aa).

A GST N-terminal domain is found at 2–86; that stretch reads AQFTLWSHAH…YLADKYDTER (85 aa). One can recognise a GST C-terminal domain in the interval 93 to 229; the sequence is DHPEYYKVIQ…FEERSKALDN (137 aa).

Belongs to the GST superfamily.

The enzyme catalyses RX + glutathione = an S-substituted glutathione + a halide anion + H(+). Involved in the oxidative stress response and detoxification. The polypeptide is Glutathione S-transferase 1 (gst1) (Schizosaccharomyces pombe (strain 972 / ATCC 24843) (Fission yeast)).